A 670-amino-acid polypeptide reads, in one-letter code: uncharacterized protein (670 aa).

The disordered stretch occupies residues 53 to 83 (PTAKPSDFPGDAVTGTQPVPREPSSLPRTTP). A run of 27 repeats spans residues 143 to 158 (ATPA…TTAT), 171 to 186 (ATPA…TTAT), 200 to 214 (ATPA…TTTP), 215 to 233 (ATPA…TTTP), 234 to 252 (AMPA…TTTP), 253 to 268 (AMPA…TTAT), 279 to 293 (TMPA…TTTP), 294 to 309 (AMPT…TTAT), 320 to 334 (TMPA…TTTP), 335 to 349 (AMPA…VTKP), 362 to 376 (AMPT…TTTP), 377 to 391 (AMPT…TTTP), 392 to 406 (AMPT…TTTP), 407 to 421 (AKPA…TTTP), 422 to 436 (AMPA…TTAP), 437 to 452 (ATPA…TKPT), 464 to 477 (VKPT…TTTT), 478 to 493 (AKPT…TKPT), 504 to 517 (AKPT…TVAT), 518 to 531 (AKPT…TTTT), 532 to 545 (AKPT…TTTT), 546 to 559 (AKPT…TTTT), 560 to 573 (AKPT…TTTT), 574 to 587 (AKPA…TTTT), 588 to 601 (AKPA…TTTT), 602 to 615 (AKPA…TTTT), and 616 to 629 (AKPA…TTTT). The segment at 187–225 (PAGANDTAVTTTSATPAGANDTAVTTTPATPAGANDTAN) is disordered. Residues 205 to 225 (ANDTAVTTTPATPAGANDTAN) show a composition bias toward low complexity. A disordered region spans residues 339-395 (GANDTANVTKPAGSTDTVVTTTPAMPTGATDTVVTTTPAMPTGATDTVVTTTPAMPT). Positions 342–362 (DTANVTKPAGSTDTVVTTTPA) are enriched in polar residues. Residues 363–395 (MPTGATDTVVTTTPAMPTGATDTVVTTTPAMPT) show a composition bias toward low complexity. Low complexity-rich tracts occupy residues 471–482 (GTVTTTTAKPTG) and 490–503 (TKPT…TTTT). The segment at 471 to 503 (GTVTTTTAKPTGANDTANVTKPTGATGTVTTTT) is disordered. Positions 525 to 634 (GTVTTTTAKP…VTTTTAKPAG (110 aa)) are enriched in low complexity. The segment at 525–670 (GTVTTTTAKP…GHKPKSGARR (146 aa)) is disordered. The span at 638-654 (GHGHGHGHGHGHGHGHG) shows a compositional bias: basic residues.

This is an uncharacterized protein from Ictalurid herpesvirus 1 (strain Auburn) (IcHV-1).